The chain runs to 304 residues: HPr kinase/phosphorylase (304 aa).

Residues H136 and K157 contribute to the active site. An ATP-binding site is contributed by 151–158; the sequence is GESGIGKS. Mg(2+) is bound at residue S158. The Proton acceptor; for phosphorylation activity. Proton donor; for dephosphorylation activity role is filled by D175. The segment at 198-207 is important for the catalytic mechanism of both phosphorylation and dephosphorylation; that stretch reads LEVRGIGIID. E199 provides a ligand contact to Mg(2+). The active site involves R240. The interval 261–266 is important for the catalytic mechanism of dephosphorylation; sequence PVRPGR.

It belongs to the HPrK/P family. As to quaternary structure, homohexamer. Mg(2+) is required as a cofactor.

It catalyses the reaction [HPr protein]-L-serine + ATP = [HPr protein]-O-phospho-L-serine + ADP + H(+). The enzyme catalyses [HPr protein]-O-phospho-L-serine + phosphate + H(+) = [HPr protein]-L-serine + diphosphate. Functionally, catalyzes the ATP- as well as the pyrophosphate-dependent phosphorylation of a specific serine residue in HPr, a phosphocarrier protein of the phosphoenolpyruvate-dependent sugar phosphotransferase system (PTS). HprK/P also catalyzes the pyrophosphate-producing, inorganic phosphate-dependent dephosphorylation (phosphorolysis) of seryl-phosphorylated HPr (P-Ser-HPr). The two antagonistic activities of HprK/P are regulated by several intracellular metabolites, which change their concentration in response to the absence or presence of rapidly metabolisable carbon sources (glucose, fructose, etc.) in the growth medium. Therefore, by controlling the phosphorylation state of HPr, HPrK/P is a sensor enzyme that plays a major role in the regulation of carbon metabolism and sugar transport: it mediates carbon catabolite repression (CCR), and regulates PTS-catalyzed carbohydrate uptake and inducer exclusion. In Clostridium botulinum (strain Eklund 17B / Type B), this protein is HPr kinase/phosphorylase.